The chain runs to 397 residues: Argininosuccinate synthase (397 aa).

9 to 17 contacts ATP; sequence AYSGGLDTT. Residue Tyr87 coordinates L-citrulline. Gly117 is an ATP binding site. Residues Thr119, Asn123, and Asp124 each coordinate L-aspartate. Residue Asn123 participates in L-citrulline binding. The L-citrulline site is built by Arg127, Ser174, Ser183, Glu259, and Tyr271.

The protein belongs to the argininosuccinate synthase family. Type 1 subfamily. Homotetramer.

Its subcellular location is the cytoplasm. It carries out the reaction L-citrulline + L-aspartate + ATP = 2-(N(omega)-L-arginino)succinate + AMP + diphosphate + H(+). Its pathway is amino-acid biosynthesis; L-arginine biosynthesis; L-arginine from L-ornithine and carbamoyl phosphate: step 2/3. This chain is Argininosuccinate synthase, found in Pyrobaculum aerophilum (strain ATCC 51768 / DSM 7523 / JCM 9630 / CIP 104966 / NBRC 100827 / IM2).